Reading from the N-terminus, the 155-residue chain is Probable ribosome biogenesis protein RLP24 (155 aa).

Belongs to the eukaryotic ribosomal protein eL24 family.

This is Probable ribosome biogenesis protein RLP24 (RPL24) from Encephalitozoon cuniculi (strain GB-M1) (Microsporidian parasite).